Consider the following 1040-residue polypeptide: Multidrug resistance protein MdtB (1040 aa).

Transmembrane regions (helical) follow at residues 15 to 37, 345 to 362, 367 to 389, 396 to 418, 438 to 460, 472 to 494, 535 to 557, 867 to 889, 909 to 931, 968 to 990, and 1000 to 1022; these read LFIL…GIIG, FELM…YLFL, ATII…MVFL, LTLM…VIEN, GEIG…PLLF, FAVT…TPMM, HPWL…WITI, VWLI…ESFI, LIIA…IGIV, ILMT…GVGA, and MVGG…YLLF.

The protein belongs to the resistance-nodulation-cell division (RND) (TC 2.A.6) family. MdtB subfamily. Part of a tripartite efflux system composed of MdtA, MdtB and MdtC. MdtB forms a heteromultimer with MdtC.

It localises to the cell inner membrane. The chain is Multidrug resistance protein MdtB from Salmonella typhi.